A 353-amino-acid chain; its full sequence is Inactive ADP-ribosyltransferase ARH2 (353 aa).

Position 27 is a phosphoserine (serine 27).

Belongs to the ADP-ribosylglycohydrolase family.

The protein resides in the cytoplasm. It is found in the myofibril. Its subcellular location is the sarcomere. In terms of biological role, required for myofibril assembly and outgrowth of the cardiac chambers in the developing heart. Appears to be catalytically inactive, showing no activity against O-acetyl-ADP-ribose. The sequence is that of Inactive ADP-ribosyltransferase ARH2 (Adprhl1) from Rattus norvegicus (Rat).